The chain runs to 479 residues: Phosphoglycerate kinase, glycosomal (479 aa).

(2R)-3-phosphoglycerate contacts are provided by Val-23, Asp-24, Phe-25, Asn-26, Arg-39, Ser-61, His-62, Gly-64, Arg-65, Arg-132, His-168, and Arg-169. Residues Gly-214 and Ala-215 each contribute to the ADP site. A CDP-binding site is contributed by Gly-214. Residues Ala-215 and Lys-216 each coordinate AMP. Position 215 (Ala-215) interacts with ATP. Ala-215 contributes to the Mg(2+) binding site. (2R)-3-phosphoglycerate is bound at residue Lys-216. Residue Asp-219 coordinates CDP. Asp-219 is a Mg(2+) binding site. Lys-220 and Gly-238 together coordinate ADP. Lys-220 is an AMP binding site. Lys-220 contributes to the ATP binding site. CDP is bound at residue Gly-238. 2 residues coordinate AMP: Ala-239 and Ala-311. ATP-binding residues include Ala-239 and Ala-311. ADP-binding residues include Ala-311 and Asn-335. CDP-binding residues include Gly-336 and Phe-341. 4 residues coordinate ADP: Phe-341, Glu-342, Asp-374, and Thr-375. Residue Glu-342 participates in AMP binding. ATP-binding residues include Glu-342, Asp-374, and Thr-375. Residue Asp-374 coordinates Mg(2+).

This sequence belongs to the phosphoglycerate kinase family. Monomer. It depends on Mg(2+) as a cofactor.

Its subcellular location is the glycosome. The enzyme catalyses (2R)-3-phosphoglycerate + ATP = (2R)-3-phospho-glyceroyl phosphate + ADP. The protein operates within carbohydrate degradation; glycolysis; pyruvate from D-glyceraldehyde 3-phosphate: step 2/5. This is Phosphoglycerate kinase, glycosomal (PGKC) from Leishmania mexicana.